Here is a 439-residue protein sequence, read N- to C-terminus: Adenylosuccinate synthetase (439 aa).

GTP-binding positions include 12-18 and 40-42; these read GDEGKGK and GHT. Asp13 serves as the catalytic Proton acceptor. 2 residues coordinate Mg(2+): Asp13 and Gly40. IMP-binding positions include 13 to 16, 38 to 41, Thr137, Arg151, Gln232, Thr247, and Arg311; these read DEGK and NAGH. Catalysis depends on His41, which acts as the Proton donor. Substrate is bound at residue 307-313; it reads ATTGRPR. Residues Arg313, 339–341, and 421–423 contribute to the GTP site; these read KLD and SNG.

Belongs to the adenylosuccinate synthetase family. In terms of assembly, homodimer. Requires Mg(2+) as cofactor.

It is found in the cytoplasm. The catalysed reaction is IMP + L-aspartate + GTP = N(6)-(1,2-dicarboxyethyl)-AMP + GDP + phosphate + 2 H(+). It functions in the pathway purine metabolism; AMP biosynthesis via de novo pathway; AMP from IMP: step 1/2. Its function is as follows. Plays an important role in the de novo pathway of purine nucleotide biosynthesis. Catalyzes the first committed step in the biosynthesis of AMP from IMP. The polypeptide is Adenylosuccinate synthetase (Salinibacter ruber (strain DSM 13855 / M31)).